The chain runs to 254 residues: Ornithine decarboxylase antizyme (254 aa).

Belongs to the ODC antizyme family. In terms of assembly, interacts with ODC1 and thereby sterically blocks ODC homodimerization.

Ornithine decarboxylase (ODC) antizyme protein that negatively regulates ODC activity and intracellular polyamine biosynthesis and uptake in response to increased intracellular polyamine levels. Binds to ODC monomers, inhibiting the assembly of the functional ODC homodimer, and targets the monomers for ubiquitin-independent proteolytic destruction by the 26S proteasome. Required for cellular differentiation in neuronal and myogenic lineages during embryonic development. In Drosophila melanogaster (Fruit fly), this protein is Ornithine decarboxylase antizyme (Oda).